Consider the following 432-residue polypeptide: Diaminopimelate decarboxylase (432 aa).

Position 66 is an N6-(pyridoxal phosphate)lysine (K66). Residues G248 and 290–293 (EPGR) contribute to the pyridoxal 5'-phosphate site. Substrate contacts are provided by R293, R330, and Y334. C361 (proton donor) is an active-site residue. Positions 362 and 390 each coordinate substrate. Y390 provides a ligand contact to pyridoxal 5'-phosphate.

It belongs to the Orn/Lys/Arg decarboxylase class-II family. LysA subfamily. Homodimer. Pyridoxal 5'-phosphate serves as cofactor.

It carries out the reaction meso-2,6-diaminopimelate + H(+) = L-lysine + CO2. Its pathway is amino-acid biosynthesis; L-lysine biosynthesis via DAP pathway; L-lysine from DL-2,6-diaminopimelate: step 1/1. Specifically catalyzes the decarboxylation of meso-diaminopimelate (meso-DAP) to L-lysine. This chain is Diaminopimelate decarboxylase, found in Bacillus methanolicus.